An 832-amino-acid polypeptide reads, in one-letter code: Protein P (832 aa).

Residues 1 to 177 are terminal protein domain (TP); it reads MPLSYQHFRR…FCGSPYSWEQ (177 aa). The tract at residues 178–335 is spacer; sequence DLQHGAESIH…YCLSLIVNLL (158 aa). Disordered regions lie at residues 186–218 and 239–266; these read IHQQSSGILSRPPVGSSLQSKHRKSRLGLQSQQ and TARRPFGVEPSGSGHTTHRASKSASCLY. Residues 336–679 are polymerase/reverse transcriptase domain (RT); sequence EDWGPCDEYG…YLNLYPVARQ (344 aa). In terms of domain architecture, Reverse transcriptase spans 346 to 589; the sequence is EHHIRIPRTP…YSLHFMGYVI (244 aa). Mg(2+) is bound by residues Asp418, Asp540, and Asp541.

This sequence belongs to the hepadnaviridae P protein family.

The enzyme catalyses DNA(n) + a 2'-deoxyribonucleoside 5'-triphosphate = DNA(n+1) + diphosphate. It carries out the reaction Endonucleolytic cleavage to 5'-phosphomonoester.. With respect to regulation, activated by host HSP70 and HSP40 in vitro to be able to bind the epsilon loop of the pgRNA. Because deletion of the RNase H region renders the protein partly chaperone-independent, the chaperones may be needed indirectly to relieve occlusion of the RNA-binding site by this domain. Inhibited by several reverse-transcriptase inhibitors: Lamivudine, Adefovir and Entecavir. Functionally, multifunctional enzyme that converts the viral RNA genome into dsDNA in viral cytoplasmic capsids. This enzyme displays a DNA polymerase activity that can copy either DNA or RNA templates, and a ribonuclease H (RNase H) activity that cleaves the RNA strand of RNA-DNA heteroduplexes in a partially processive 3'- to 5'-endonucleasic mode. Neo-synthesized pregenomic RNA (pgRNA) are encapsidated together with the P protein, and reverse-transcribed inside the nucleocapsid. Initiation of reverse-transcription occurs first by binding the epsilon loop on the pgRNA genome, and is initiated by protein priming, thereby the 5'-end of (-)DNA is covalently linked to P protein. Partial (+)DNA is synthesized from the (-)DNA template and generates the relaxed circular DNA (RC-DNA) genome. After budding and infection, the RC-DNA migrates in the nucleus, and is converted into a plasmid-like covalently closed circular DNA (cccDNA). The activity of P protein does not seem to be necessary for cccDNA generation, and is presumably released from (+)DNA by host nuclear DNA repair machinery. The polypeptide is Protein P (Homo sapiens (Human)).